We begin with the raw amino-acid sequence, 929 residues long: Leucine--tRNA ligase (929 aa).

A 'HIGH' region motif is present at residues 42-52 (PYPSGNLHMGH). The 'KMSKS' region motif lies at 614 to 618 (KMSKS). Position 617 (Lys617) interacts with ATP.

The protein belongs to the class-I aminoacyl-tRNA synthetase family.

It localises to the cytoplasm. The catalysed reaction is tRNA(Leu) + L-leucine + ATP = L-leucyl-tRNA(Leu) + AMP + diphosphate. The protein is Leucine--tRNA ligase of Trichodesmium erythraeum (strain IMS101).